The following is a 449-amino-acid chain: UDP-N-acetylmuramoylalanine--D-glutamate ligase (449 aa).

Glycine 113–threonine 119 provides a ligand contact to ATP.

This sequence belongs to the MurCDEF family.

It is found in the cytoplasm. It carries out the reaction UDP-N-acetyl-alpha-D-muramoyl-L-alanine + D-glutamate + ATP = UDP-N-acetyl-alpha-D-muramoyl-L-alanyl-D-glutamate + ADP + phosphate + H(+). It functions in the pathway cell wall biogenesis; peptidoglycan biosynthesis. Functionally, cell wall formation. Catalyzes the addition of glutamate to the nucleotide precursor UDP-N-acetylmuramoyl-L-alanine (UMA). The protein is UDP-N-acetylmuramoylalanine--D-glutamate ligase of Microcystis aeruginosa (strain NIES-843 / IAM M-2473).